The primary structure comprises 263 residues: Chymotrypsinogen B (263 aa).

An N-terminal signal peptide occupies residues 1–18 (MASLWLLSCFSLVGAAFG). 5 disulfide bridges follow: Cys19–Cys140, Cys60–Cys76, Cys154–Cys219, Cys186–Cys200, and Cys209–Cys238. One can recognise a Peptidase S1 domain in the interval 34–261 (IVNGEDAVPG…LIPWVQKILA (228 aa)). His75 serves as the catalytic Charge relay system. Ser93 carries the post-translational modification Phosphoserine. Asp120 acts as the Charge relay system in catalysis. Catalysis depends on Ser213, which acts as the Charge relay system.

It belongs to the peptidase S1 family.

Its subcellular location is the secreted. The protein localises to the extracellular space. It carries out the reaction Preferential cleavage: Tyr-|-Xaa, Trp-|-Xaa, Phe-|-Xaa, Leu-|-Xaa.. This Homo sapiens (Human) protein is Chymotrypsinogen B.